The primary structure comprises 200 residues: Potassium-transporting ATPase KdpC subunit (200 aa).

Residues 6–26 form a helical membrane-spanning segment; the sequence is PALVLLILLTLITGIAYPLLT.

The protein belongs to the KdpC family. As to quaternary structure, the system is composed of three essential subunits: KdpA, KdpB and KdpC.

The protein resides in the cell inner membrane. Part of the high-affinity ATP-driven potassium transport (or Kdp) system, which catalyzes the hydrolysis of ATP coupled with the electrogenic transport of potassium into the cytoplasm. This subunit acts as a catalytic chaperone that increases the ATP-binding affinity of the ATP-hydrolyzing subunit KdpB by the formation of a transient KdpB/KdpC/ATP ternary complex. The sequence is that of Potassium-transporting ATPase KdpC subunit from Yersinia pseudotuberculosis serotype O:1b (strain IP 31758).